The chain runs to 213 residues: 3-isopropylmalate dehydratase small subunit (213 aa).

Belongs to the LeuD family. LeuD type 1 subfamily. In terms of assembly, heterodimer of LeuC and LeuD.

It catalyses the reaction (2R,3S)-3-isopropylmalate = (2S)-2-isopropylmalate. Its pathway is amino-acid biosynthesis; L-leucine biosynthesis; L-leucine from 3-methyl-2-oxobutanoate: step 2/4. Functionally, catalyzes the isomerization between 2-isopropylmalate and 3-isopropylmalate, via the formation of 2-isopropylmaleate. This chain is 3-isopropylmalate dehydratase small subunit, found in Neisseria gonorrhoeae (strain ATCC 700825 / FA 1090).